The following is a 50-amino-acid chain: Light-harvesting protein B-880 alpha chain (50 aa).

The Cytoplasmic portion of the chain corresponds to 1 to 12 (MYKLWLLFDPRR). Residues 13–33 (ALVALSAFLFVLALIIHFIAL) form a helical membrane-spanning segment. H29 provides a ligand contact to a bacteriochlorophyll. Residues 34-50 (STDRFNWLEGKPAVKAA) are Periplasmic-facing.

The protein belongs to the antenna complex alpha subunit family. The core complex is formed by different alpha and beta chains, binding bacteriochlorophyll molecules, and arranged most probably in tetrameric structures disposed around the reaction center. The non-pigmented gamma chains may constitute additional components.

It localises to the cell inner membrane. Its function is as follows. Antenna complexes are light-harvesting systems, which transfer the excitation energy to the reaction centers. This Rhodoblastus acidophilus (Rhodopseudomonas acidophila) protein is Light-harvesting protein B-880 alpha chain.